The sequence spans 107 residues: Small ribosomal subunit protein bS16 (107 aa).

A disordered region spans residues 85-107 (REARNNPEKAVPRKERKAAEAGK).

This sequence belongs to the bacterial ribosomal protein bS16 family.

This Rhodopseudomonas palustris (strain BisB5) protein is Small ribosomal subunit protein bS16.